The sequence spans 261 residues: Indole-3-glycerol phosphate synthase (261 aa).

This sequence belongs to the TrpC family.

It catalyses the reaction 1-(2-carboxyphenylamino)-1-deoxy-D-ribulose 5-phosphate + H(+) = (1S,2R)-1-C-(indol-3-yl)glycerol 3-phosphate + CO2 + H2O. Its pathway is amino-acid biosynthesis; L-tryptophan biosynthesis; L-tryptophan from chorismate: step 4/5. The polypeptide is Indole-3-glycerol phosphate synthase (Burkholderia pseudomallei (strain 1106a)).